The following is a 434-amino-acid chain: Nicotinate phosphoribosyltransferase (434 aa).

H242 carries the post-translational modification Phosphohistidine; by autocatalysis.

This sequence belongs to the NAPRTase family. Transiently phosphorylated on a His residue during the reaction cycle. Phosphorylation strongly increases the affinity for substrates and increases the rate of nicotinate D-ribonucleotide production. Dephosphorylation regenerates the low-affinity form of the enzyme, leading to product release.

It carries out the reaction nicotinate + 5-phospho-alpha-D-ribose 1-diphosphate + ATP + H2O = nicotinate beta-D-ribonucleotide + ADP + phosphate + diphosphate. Its pathway is cofactor biosynthesis; NAD(+) biosynthesis; nicotinate D-ribonucleotide from nicotinate: step 1/1. Its function is as follows. Catalyzes the synthesis of beta-nicotinate D-ribonucleotide from nicotinate and 5-phospho-D-ribose 1-phosphate at the expense of ATP. The protein is Nicotinate phosphoribosyltransferase of Rhizobium leguminosarum bv. trifolii (strain WSM2304).